Consider the following 160-residue polypeptide: Ribonuclease ARB_07070 (160 aa).

The signal sequence occupies residues 1 to 18 (MVSFKAILTLSLIGAAFA). The tract at residues 26 to 51 (AEPVEDSGAVANSPEGSGMDLGGTDP) is disordered. The Proton acceptor role is filled by E103. H144 acts as the Proton donor in catalysis.

The protein belongs to the ribonuclease U2 family.

The protein resides in the secreted. Its function is as follows. This purine-specific ribonuclease cleaves 28S RNA in eukaryotic ribosomes, inhibits protein synthesis, and shows antitumor activity. This chain is Ribonuclease ARB_07070, found in Arthroderma benhamiae (strain ATCC MYA-4681 / CBS 112371) (Trichophyton mentagrophytes).